We begin with the raw amino-acid sequence, 31 residues long: Photosystem II reaction center protein T (31 aa).

A helical transmembrane segment spans residues 3 to 23; it reads ALVYVFLLTGTLMVIFFAIFF.

Belongs to the PsbT family. As to quaternary structure, PSII is composed of 1 copy each of membrane proteins PsbA, PsbB, PsbC, PsbD, PsbE, PsbF, PsbH, PsbI, PsbJ, PsbK, PsbL, PsbM, PsbT, PsbX, PsbY, PsbZ, Psb30/Ycf12, at least 3 peripheral proteins of the oxygen-evolving complex and a large number of cofactors. It forms dimeric complexes.

The protein localises to the plastid. The protein resides in the chloroplast thylakoid membrane. Functionally, found at the monomer-monomer interface of the photosystem II (PS II) dimer, plays a role in assembly and dimerization of PSII. PSII is a light-driven water plastoquinone oxidoreductase, using light energy to abstract electrons from H(2)O, generating a proton gradient subsequently used for ATP formation. This is Photosystem II reaction center protein T from Pyropia yezoensis (Susabi-nori).